Here is a 317-residue protein sequence, read N- to C-terminus: Putative GTPase PH0274 (317 aa).

GTP-binding positions include 54–62 (GPPGAGKST), D196, and 231–233 (VGT).

The protein belongs to the SIMIBI class G3E GTPase family. ArgK/MeaB subfamily.

In terms of biological role, may have GTPase activity. May also bind and hydrolyze ATP. May function as chaperone. This is Putative GTPase PH0274 from Pyrococcus horikoshii (strain ATCC 700860 / DSM 12428 / JCM 9974 / NBRC 100139 / OT-3).